A 98-amino-acid chain; its full sequence is NADH-ubiquinone oxidoreductase chain 4L (98 aa).

A run of 3 helical transmembrane segments spans residues 1–21, 29–49, and 59–79; these read MSLVHMNILLAFTMSLTGLLM, ALLCLEGMMLSLFILMTITIL, and TPIILLVFAACEAAVGLALLV.

The protein belongs to the complex I subunit 4L family. In terms of assembly, core subunit of respiratory chain NADH dehydrogenase (Complex I) which is composed of 45 different subunits.

It localises to the mitochondrion inner membrane. The catalysed reaction is a ubiquinone + NADH + 5 H(+)(in) = a ubiquinol + NAD(+) + 4 H(+)(out). In terms of biological role, core subunit of the mitochondrial membrane respiratory chain NADH dehydrogenase (Complex I) which catalyzes electron transfer from NADH through the respiratory chain, using ubiquinone as an electron acceptor. Part of the enzyme membrane arm which is embedded in the lipid bilayer and involved in proton translocation. The protein is NADH-ubiquinone oxidoreductase chain 4L (MT-ND4L) of Lipotes vexillifer (Yangtze river dolphin).